Here is a 996-residue protein sequence, read N- to C-terminus: Phototropin-1 (996 aa).

The segment at 1–184 is disordered; the sequence is MEPTEKPSTK…PGGRSGIPRV (184 aa). Phosphoserine occurs at positions 23 and 58. Over residues 49 to 59 the composition is skewed to polar residues; the sequence is QNLSDPRGTSP. Pro residues predominate over residues 60–70; that stretch reads QPRPQQEPAPS. Over residues 141–153 the composition is skewed to polar residues; it reads SGGTENDPNGKKT. Residues 155-166 are compositionally biased toward low complexity; sequence SQRNSQNSCRSS. The PAS 1 domain occupies 184-257; the sequence is VSEDLKDALS…AKIRETLAAG (74 aa). A Phosphoserine modification is found at Ser185. FMN is bound at residue Asn233. Residue Cys234 is modified to S-4a-FMN cysteine. Residues Arg235, Gln238, Arg251, Asn266, Asn276, Gln297, and Lys302 each contribute to the FMN site. Residues 258 to 312 enclose the PAC 1 domain; it reads NNYCGRILNYKKDGTSFWNLLTIAPIKDESGKVLKFIGMQVEVSKHTEGAKEKAL. A phosphoserine mark is found at Ser350, Ser376, and Ser410. Disordered stretches follow at residues 351–413 and 434–453; these read ESTN…SLSF and YGEE…SVDD. A compositionally biased stretch (acidic residues) spans 434 to 443; sequence YGEEDDEISD. The span at 444 to 453 shows a compositional bias: basic and acidic residues; it reads RDERPESVDD. The residue at position 450 (Ser450) is a Phosphoserine. The PAS 2 domain occupies 462-535; the sequence is KGIDLATTLE…KKIRNAIDNQ (74 aa). Asn511 is a binding site for FMN. Residue Cys512 is modified to S-4a-FMN cysteine. 7 residues coordinate FMN: Arg513, Gln516, Arg529, Asn544, Asn554, Phe556, and Gln575. The 55-residue stretch at 536-590 folds into the PAC 2 domain; it reads TEVTVQLINYTKSGKKFWNIFHLQPMRDQKGEVQYFIGVQLDGSKHVEPVRNVIE. The Protein kinase domain maps to 663 to 952; the sequence is FKPVKPLGSG…ANEVKQHSFF (290 aa). ATP is bound by residues 669–677 and Lys692; that span reads LGSGDTGSV. Residue Asp788 is the Proton acceptor of the active site. Residues 806 to 862 are activation loop; the sequence is DFDLSCLTSCKPQLLIPSIDEKKKKKQQKSQQTPIFMAEPMRASNSFVGTEEYIAPE.

Belongs to the protein kinase superfamily. AGC Ser/Thr protein kinase family. Homodimer; disulfide-linked. Interacts with PKS1, PKS2, RPT2, RPT3, PHOT2 and BLUS1. Subunit of a complex made of CAR6, PHOT1 and RPT3/NPH3. Associates with CBC1 and CBC2. Binds to BHP. FMN is required as a cofactor. In terms of processing, autophosphorylated at Ser-185, Ser-350 and Ser-410 in response to blue light irradiation. 2 molecules of FMN bind covalently to cysteines after exposure to blue light and are reversed in the dark. Present in guard cells (at protein level).

It is found in the cell membrane. The protein localises to the cytoplasm. It carries out the reaction L-seryl-[protein] + ATP = O-phospho-L-seryl-[protein] + ADP + H(+). The enzyme catalyses L-threonyl-[protein] + ATP = O-phospho-L-threonyl-[protein] + ADP + H(+). With respect to regulation, autophosphorylation is inhibited by staurosporine, but not by tyrphostin 9, sphingosine, GW5074 and BML-265. Functionally, protein kinase that acts as a blue light (BL) photoreceptor in a signal-transduction pathway for photo-induced movements. Triggers the phosphorylation of AHA1 and AHA2 C-terminal penultimate Thr in guard cells to activate them and induce stomatal opening in response to blue light (BL). Also phosphorylates BLUS1, a kinase involved in stomatal opening. Mediates the phosphorylation of CBC1 in stomata, but not of CBC2, in response to blue light. Required for blue light mediated mRNA destabilization. Mediates calcium spiking of extracellular origin in response to a low rate of blue light. Also mediates rapid membrane depolarization and growth inhibition in response to blue light. Necessary for root phototropism. Involved in hypocotyl phototropism under a low rate but not under a high rate of blue light. Contributes to the chloroplast accumulation but seems not to be required for chloroplast translocation. Regulates stomata opening and photomorphogenesis response of leaf tissue. Confers sensitivity to drought. Not involved in hypocotyl elongation inhibition, anthocyanin accumulation or cotyledon opening. Involved in the regulation of leaf position and morphology via the phosphorylation of ABCB19 during blue light responses to modulate auxin distribution. The chain is Phototropin-1 from Arabidopsis thaliana (Mouse-ear cress).